The primary structure comprises 186 residues: ATP synthase subunit b (186 aa).

The chain crosses the membrane as a helical span at residues 25–45; that stretch reads IVWSVVCVAIIAVVFYKYVIP.

The protein belongs to the ATPase B chain family. In terms of assembly, F-type ATPases have 2 components, F(1) - the catalytic core - and F(0) - the membrane proton channel. F(1) has five subunits: alpha(3), beta(3), gamma(1), delta(1), epsilon(1). F(0) has three main subunits: a(1), b(2) and c(10-14). The alpha and beta chains form an alternating ring which encloses part of the gamma chain. F(1) is attached to F(0) by a central stalk formed by the gamma and epsilon chains, while a peripheral stalk is formed by the delta and b chains.

The protein localises to the cell membrane. Its function is as follows. F(1)F(0) ATP synthase produces ATP from ADP in the presence of a proton or sodium gradient. F-type ATPases consist of two structural domains, F(1) containing the extramembraneous catalytic core and F(0) containing the membrane proton channel, linked together by a central stalk and a peripheral stalk. During catalysis, ATP synthesis in the catalytic domain of F(1) is coupled via a rotary mechanism of the central stalk subunits to proton translocation. In terms of biological role, component of the F(0) channel, it forms part of the peripheral stalk, linking F(1) to F(0). This chain is ATP synthase subunit b, found in Nocardia farcinica (strain IFM 10152).